The sequence spans 130 residues: Small ribosomal subunit protein uS11 (130 aa).

Belongs to the universal ribosomal protein uS11 family. Part of the 30S ribosomal subunit. Interacts with proteins S7 and S18. Binds to IF-3.

In terms of biological role, located on the platform of the 30S subunit, it bridges several disparate RNA helices of the 16S rRNA. Forms part of the Shine-Dalgarno cleft in the 70S ribosome. The sequence is that of Small ribosomal subunit protein uS11 from Lactobacillus helveticus (strain DPC 4571).